The chain runs to 47 residues: Photosystem II reaction center protein K (47 aa).

Residues 1–10 constitute a propeptide that is removed on maturation; the sequence is MAAFSLDLLA. The helical transmembrane segment at 19 to 39 threads the bilayer; sequence FGPLIDILPIIPVFFLLLAFV.

It belongs to the PsbK family. PSII is composed of 1 copy each of membrane proteins PsbA, PsbB, PsbC, PsbD, PsbE, PsbF, PsbH, PsbI, PsbJ, PsbK, PsbL, PsbM, PsbT, PsbX, PsbY, PsbZ, Psb30/Ycf12, peripheral proteins PsbO, CyanoQ (PsbQ), PsbU, PsbV and a large number of cofactors. It forms dimeric complexes.

The protein localises to the cellular thylakoid membrane. In terms of biological role, one of the components of the core complex of photosystem II (PSII). PSII is a light-driven water:plastoquinone oxidoreductase that uses light energy to abstract electrons from H(2)O, generating O(2) and a proton gradient subsequently used for ATP formation. It consists of a core antenna complex that captures photons, and an electron transfer chain that converts photonic excitation into a charge separation. This chain is Photosystem II reaction center protein K, found in Synechococcus sp. (strain WH7803).